Consider the following 390-residue polypeptide: Na(+)/H(+) antiporter NhaA (390 aa).

A run of 12 helical transmembrane segments spans residues 14–34 (AAGG…ANLN), 61–81 (MLLW…GLEV), 97–117 (SLPV…YLAF), 126–146 (AGWA…LALL), 156–176 (VFLM…IALF), 181–201 (LSMV…VLNL), 221–241 (VLKS…FVPL), 256–276 (ALHP…NAGV), 280–300 (GVTL…GLFI), 305–325 (GISL…PPGV), 330–350 (ILAV…IASL), and 362–382 (WAKL…YALL).

Belongs to the NhaA Na(+)/H(+) (TC 2.A.33) antiporter family.

The protein localises to the cell inner membrane. It catalyses the reaction Na(+)(in) + 2 H(+)(out) = Na(+)(out) + 2 H(+)(in). Na(+)/H(+) antiporter that extrudes sodium in exchange for external protons. The polypeptide is Na(+)/H(+) antiporter NhaA (Cronobacter sakazakii (strain ATCC BAA-894) (Enterobacter sakazakii)).